Reading from the N-terminus, the 235-residue chain is Aspartate/glutamate leucyltransferase (235 aa).

The protein belongs to the R-transferase family. Bpt subfamily.

It localises to the cytoplasm. It catalyses the reaction N-terminal L-glutamyl-[protein] + L-leucyl-tRNA(Leu) = N-terminal L-leucyl-L-glutamyl-[protein] + tRNA(Leu) + H(+). The enzyme catalyses N-terminal L-aspartyl-[protein] + L-leucyl-tRNA(Leu) = N-terminal L-leucyl-L-aspartyl-[protein] + tRNA(Leu) + H(+). Its function is as follows. Functions in the N-end rule pathway of protein degradation where it conjugates Leu from its aminoacyl-tRNA to the N-termini of proteins containing an N-terminal aspartate or glutamate. In Pseudomonas putida (strain ATCC 700007 / DSM 6899 / JCM 31910 / BCRC 17059 / LMG 24140 / F1), this protein is Aspartate/glutamate leucyltransferase.